The primary structure comprises 82 residues: Penaeidin-3f (82 aa).

The first 19 residues, 1–19, serve as a signal peptide directing secretion; that stretch reads MRLVACLVFLASFALVCQG. At glutamine 20 the chain carries Pyrrolidone carboxylic acid. 3 disulfide bridges follow: cysteine 51/cysteine 66, cysteine 55/cysteine 73, and cysteine 67/cysteine 74. Serine 81 carries the post-translational modification Serine amide.

Belongs to the penaeidin family.

Its subcellular location is the cytoplasmic granule. Its function is as follows. Antibacterial and antifungal activity. Presents chitin-binding activity. The sequence is that of Penaeidin-3f from Penaeus vannamei (Whiteleg shrimp).